A 286-amino-acid chain; its full sequence is Bifunctional protein FolD (286 aa).

Residues 166 to 168 (GRS) and Ser-191 contribute to the NADP(+) site.

It belongs to the tetrahydrofolate dehydrogenase/cyclohydrolase family. Homodimer.

It catalyses the reaction (6R)-5,10-methylene-5,6,7,8-tetrahydrofolate + NADP(+) = (6R)-5,10-methenyltetrahydrofolate + NADPH. The enzyme catalyses (6R)-5,10-methenyltetrahydrofolate + H2O = (6R)-10-formyltetrahydrofolate + H(+). The protein operates within one-carbon metabolism; tetrahydrofolate interconversion. Functionally, catalyzes the oxidation of 5,10-methylenetetrahydrofolate to 5,10-methenyltetrahydrofolate and then the hydrolysis of 5,10-methenyltetrahydrofolate to 10-formyltetrahydrofolate. The protein is Bifunctional protein FolD of Lactiplantibacillus plantarum (strain ATCC BAA-793 / NCIMB 8826 / WCFS1) (Lactobacillus plantarum).